The primary structure comprises 449 residues: Probable magnetosome protein Mms48 (449 aa).

The N-terminal stretch at 1–18 (MLLRLIVLLIFMSPVVFA) is a signal peptide. The helical transmembrane segment at 40-60 (SNMPVLLAVILVVFLIFSALS) threads the bilayer. The TPR repeat unit spans residues 323–356 (PDGHLAAGEAAFAVQKWGVARRHIMAALKIAPDA).

It is found in the magnetosome membrane. In terms of biological role, overexpression in wild-type cells increases the number of cells with double magnetosome chains significantly. The 4 genes of this operon collectively influence magnetosome size and number. This chain is Probable magnetosome protein Mms48, found in Magnetospirillum gryphiswaldense (strain DSM 6361 / JCM 21280 / NBRC 15271 / MSR-1).